The primary structure comprises 173 residues: MASYKCPDCNYVYDESAGNVHEGFSPGTPWHLIPEDWCCPDCAVRDKLDFMLIESGVGEKGVTSTHTSPNLSEVSGTSLTAEAVVAPTSLEKLPSADVKGQDLYKTQPPRSDAQGGKAYLKWICITCGHIYDEALGDEAEGFTPGTRFEDIPDDWCCPDCGATKEDYVLYEEK.

2 Rubredoxin-like domains span residues 2–53 (ASYK…FMLI) and 119–170 (YLKW…YVLY). Positions 6, 9, 39, 42, 124, 127, 157, and 160 each coordinate Fe cation.

This sequence belongs to the rubredoxin family. Fe(3+) serves as cofactor.

Its subcellular location is the cytoplasm. It participates in hydrocarbon metabolism; alkane degradation. Functionally, involved in the hydrocarbon hydroxylating system, which transfers electrons from NADH to rubredoxin reductase and then through rubredoxin to alkane 1 monooxygenase. This is Rubredoxin-2 (alkG) from Ectopseudomonas oleovorans (Pseudomonas oleovorans).